We begin with the raw amino-acid sequence, 30 residues long: Conotoxin CcTx (30 aa).

Proline 2 is modified (4-hydroxyproline). Serine 7 carries O-linked (HexNAc...) serine glycosylation. 3 disulfide bridges follow: cysteine 12–cysteine 21, cysteine 13–cysteine 26, and cysteine 24–cysteine 30. Proline 17 and proline 22 each carry 4-hydroxyproline.

O-glycosylated at Ser-7 by a core type 9 glycan, containing both D- and L-galactose units (alpha-L-Galp-(1-&gt;4)-alpha-D- GlcpNAc-(1-&gt;6)-[alpha-L-Galp-(1-&gt;2)-bets-D-Galp-(1-&gt;3)-]alpha-D-GalpNAc-(1-&gt;O)). Expressed by the venom duct.

It localises to the secreted. Functionally, may specifically activate neuronal voltage-gated sodium channels (Nav) at the resting membrane potential. Causes a marked contraction and extension of the caudal and dorsal fins in fish and noticeable spontaneous contractions of isolated frog neuromuscular preparations. The chain is Conotoxin CcTx from Conus consors (Singed cone).